The sequence spans 245 residues: Pyridoxine 5'-phosphate synthase (245 aa).

Residue N7 participates in 3-amino-2-oxopropyl phosphate binding. 9-10 is a 1-deoxy-D-xylulose 5-phosphate binding site; sequence DH. Residue R18 participates in 3-amino-2-oxopropyl phosphate binding. Residue H43 is the Proton acceptor of the active site. R45 and H50 together coordinate 1-deoxy-D-xylulose 5-phosphate. The Proton acceptor role is filled by E70. T100 is a 1-deoxy-D-xylulose 5-phosphate binding site. The Proton donor role is filled by H190. 3-amino-2-oxopropyl phosphate contacts are provided by residues G191 and 212–213; that span reads GH.

Belongs to the PNP synthase family. Homooctamer; tetramer of dimers.

The protein localises to the cytoplasm. It carries out the reaction 3-amino-2-oxopropyl phosphate + 1-deoxy-D-xylulose 5-phosphate = pyridoxine 5'-phosphate + phosphate + 2 H2O + H(+). Its pathway is cofactor biosynthesis; pyridoxine 5'-phosphate biosynthesis; pyridoxine 5'-phosphate from D-erythrose 4-phosphate: step 5/5. Functionally, catalyzes the complicated ring closure reaction between the two acyclic compounds 1-deoxy-D-xylulose-5-phosphate (DXP) and 3-amino-2-oxopropyl phosphate (1-amino-acetone-3-phosphate or AAP) to form pyridoxine 5'-phosphate (PNP) and inorganic phosphate. This chain is Pyridoxine 5'-phosphate synthase, found in Prochlorococcus marinus (strain NATL2A).